The sequence spans 204 residues: WW domain-containing protein C11B10.08 (204 aa).

In terms of domain architecture, WW spans 7–43; that stretch reads EGLPNGWVAQWDERYKCYFYVNESDPKAKPQWECPVR. The interval 32 to 117 is disordered; it reads PKAKPQWECP…GYPQQPYYYP (86 aa). 2 stretches are compositionally biased toward low complexity: residues 66–100 and 108–117; these read YSNS…GAAP and GYPQQPYYYP.

It is found in the cytoplasm. The protein resides in the nucleus. This Schizosaccharomyces pombe (strain 972 / ATCC 24843) (Fission yeast) protein is WW domain-containing protein C11B10.08.